The sequence spans 276 residues: MATYAIGDIQGCYDSLQRLLERCAFDPASDRLWLVGDLVNRGPKSLATLRLIKSLGPAALTVLGNHDLYLLMVAEGGAKFRGKDDTLQEILDAPDCAELLDWLRHQPICHTEGEYCLVHAGLLPQWTASRARELAREVEITLQGPDFREFILNLWGSEPAGWSDNLSGWARLRVIVNAMTRMRFCTLDGVMEFKVKGKLSNAPAGHIPWFDLPDRKSAKSVLVTGHWSALGLKVTPNLLALDSGCLWGGHLTAVRLEDRQVFQVDCSPTEALPLKR.

It belongs to the Ap4A hydrolase family.

The catalysed reaction is P(1),P(4)-bis(5'-adenosyl) tetraphosphate + H2O = 2 ADP + 2 H(+). Hydrolyzes diadenosine 5',5'''-P1,P4-tetraphosphate to yield ADP. This chain is Bis(5'-nucleosyl)-tetraphosphatase, symmetrical, found in Dechloromonas aromatica (strain RCB).